The sequence spans 195 residues: UDP-N-acetylbacillosamine N-acetyltransferase (195 aa).

Substrate is bound by residues 13–15 (SGH), 35–36 (DD), and Gly56. His125 serves as the catalytic Proton acceptor. The acetyl-CoA site is built by His134, Ile155, and Gly173.

It belongs to the transferase hexapeptide repeat family. As to quaternary structure, homotrimer.

It carries out the reaction UDP-N-acetylbacillosamine + acetyl-CoA = UDP-N,N'-diacetylbacillosamine + CoA + H(+). Its pathway is protein modification; protein glycosylation. Its function is as follows. Acetyltransferase that modifies the UDP-4-amino-sugar to form UDP-N,N'-diacetylbacillosamine in the N-linked protein glycosylation pathway. This chain is UDP-N-acetylbacillosamine N-acetyltransferase (pglD), found in Campylobacter jejuni subsp. jejuni serotype O:2 (strain ATCC 700819 / NCTC 11168).